Reading from the N-terminus, the 145-residue chain is Mannitol-specific phosphotransferase enzyme IIA component (145 aa).

Residues 4–144 (PILKKENIVL…EEILSILNEV (141 aa)) enclose the PTS EIIA type-2 domain. H64 functions as the Tele-phosphohistidine intermediate in the catalytic mechanism. Position 64 is a phosphohistidine; by HPr (H64).

It is found in the cytoplasm. The phosphoenolpyruvate-dependent sugar phosphotransferase system (sugar PTS), a major carbohydrate active transport system, catalyzes the phosphorylation of incoming sugar substrates concomitantly with their translocation across the cell membrane. The enzyme II CmtAB PTS system is involved in D-mannitol transport. In Geobacillus stearothermophilus (Bacillus stearothermophilus), this protein is Mannitol-specific phosphotransferase enzyme IIA component.